The sequence spans 456 residues: MSFDFLKYIKKVHFIGIGGISMSGMAEILLKKGYKVSGSDSTKSPIIDKLINLGAEIYIGHKAENIKNVDLIVYTAAVSEDNPELTKALTNNIKIMNRAEFLGYLMDGHKYNIAVSGTHGKTTTTSMMSHITVNANLDPTILVGGELNIINGNVRTGKSEYFLTEACEYKESFLKFFPYIGVILNIDADHLDYYKDINHIKNAFSKFANLIPKDGYLIACAEDENINDIIKNIDCTIITYGLNKGDIQAKNITFDNKGCASFDVIKNSSVLFSVKLNVPGSYNVLNALASICVSFALNIDKESIIKGLESFHGTHRRFELKGVRNDVTVIEDYAHHPTEIKATLSAAKNYPSNRILCVFQPHTYTRTYSLFEDFTESFYNTDTLILADIYPAREKDTGIVSSDMLGNKLRKKNINCINLHSFEDISDYLKKETKPGDLVLIMGAGDIYKAGDLFLK.

Residue 117–123 (GTHGKTT) participates in ATP binding.

The protein belongs to the MurCDEF family.

Its subcellular location is the cytoplasm. It carries out the reaction UDP-N-acetyl-alpha-D-muramate + L-alanine + ATP = UDP-N-acetyl-alpha-D-muramoyl-L-alanine + ADP + phosphate + H(+). It participates in cell wall biogenesis; peptidoglycan biosynthesis. In terms of biological role, cell wall formation. The protein is UDP-N-acetylmuramate--L-alanine ligase of Clostridium tetani (strain Massachusetts / E88).